Reading from the N-terminus, the 92-residue chain is C-C motif chemokine 4 (92 aa).

The signal sequence occupies residues 1–23; it reads MKLCVTVLSLLVLMAAFCSPALS. 2 disulfides stabilise this stretch: C34/C58 and C35/C74.

This sequence belongs to the intercrine beta (chemokine CC) family. As to quaternary structure, homodimer. Interacts with CCR5.

The protein resides in the secreted. Its function is as follows. Monokine with inflammatory and chemokinetic properties. The chain is C-C motif chemokine 4 (CCL4) from Bos taurus (Bovine).